The chain runs to 133 residues: Small ribosomal subunit protein uS11 (133 aa).

A disordered region spans residues Met-1–Leu-22. Residues Gly-7–Lys-17 are compositionally biased toward basic residues.

It belongs to the universal ribosomal protein uS11 family. In terms of assembly, part of the 30S ribosomal subunit. Interacts with proteins S7 and S18. Binds to IF-3.

Functionally, located on the platform of the 30S subunit, it bridges several disparate RNA helices of the 16S rRNA. Forms part of the Shine-Dalgarno cleft in the 70S ribosome. In Renibacterium salmoninarum (strain ATCC 33209 / DSM 20767 / JCM 11484 / NBRC 15589 / NCIMB 2235), this protein is Small ribosomal subunit protein uS11.